We begin with the raw amino-acid sequence, 368 residues long: MFHRLWTLIRKELQSLLREPQTRAILILPVLIQVILFPFAATLEVTNATIAIYDEDNGEHSVELTQRFARASAFTHVLLLKSPQEIRPTIDTQKALLLVRFPADFSRKLDTFQTAPLQLILDGRNSNSAQIAANYLQQIVKNYQQELLEGKPKPNNSELVVRNWYNPNLDYKWFVVPSLIAMITTIGVMIVTSLSVAREREQGTLDQLLVSPLTTWQIFIGKAVPALIVATFQATIVLAIGIWAYQIPFAGSLALFYFTMVIYGLSLVGFGLLISSLCSTQQQAFIGVFVFMMPAILLSGYVSPVENMPVWLQNLTWINPIRHFTDITKQIYLKDASLDIVWNSLWPLLVITATTGSAAYAMFRRKVM.

At 1-24 (MFHRLWTLIRKELQSLLREPQTRA) the chain is on the cytoplasmic side. Residues 25-45 (ILILPVLIQVILFPFAATLEV) form a helical membrane-spanning segment. The Periplasmic portion of the chain corresponds to 46–173 (TNATIAIYDE…WYNPNLDYKW (128 aa)). The region spanning 129 to 366 (AQIAANYLQQ…SAAYAMFRRK (238 aa)) is the ABC transmembrane type-2 domain. A helical transmembrane segment spans residues 174–194 (FVVPSLIAMITTIGVMIVTSL). Residues 195–222 (SVAREREQGTLDQLLVSPLTTWQIFIGK) are Cytoplasmic-facing. The helical transmembrane segment at 223-243 (AVPALIVATFQATIVLAIGIW) threads the bilayer. At 244-253 (AYQIPFAGSL) the chain is on the periplasmic side. The helical transmembrane segment at 254 to 274 (ALFYFTMVIYGLSLVGFGLLI) threads the bilayer. Residues 275–284 (SSLCSTQQQA) are Cytoplasmic-facing. A helical membrane pass occupies residues 285 to 305 (FIGVFVFMMPAILLSGYVSPV). Over 306–339 (ENMPVWLQNLTWINPIRHFTDITKQIYLKDASLD) the chain is Periplasmic. The helical transmembrane segment at 340 to 360 (IVWNSLWPLLVITATTGSAAY) threads the bilayer. The Cytoplasmic segment spans residues 361–368 (AMFRRKVM).

This sequence belongs to the ABC-2 integral membrane protein family. The complex is probably composed of two ATP-binding proteins (YbhF) and two transmembrane proteins (YbhR and YbhS).

The protein resides in the cell inner membrane. Part of the ABC transporter complex YbhFSR that could be involved in efflux of cefoperazone. Probably involved in the translocation of the substrate across the membrane. This is Probable multidrug ABC transporter permease YbhR (ybhR) from Escherichia coli O157:H7.